Consider the following 70-residue polypeptide: Large ribosomal subunit protein eL24 (70 aa).

4 residues coordinate Zn(2+): C6, C9, C32, and C36. Residues 6 to 36 (CSYCGRPIPPGYGIMYVRVDGVVLRFCSRRC) form a C4-type zinc finger.

The protein belongs to the eukaryotic ribosomal protein eL24 family. As to quaternary structure, part of the 50S ribosomal subunit. Forms a cluster with proteins L3 and L14. It depends on Zn(2+) as a cofactor.

In terms of biological role, binds to the 23S rRNA. This chain is Large ribosomal subunit protein eL24, found in Caldivirga maquilingensis (strain ATCC 700844 / DSM 13496 / JCM 10307 / IC-167).